We begin with the raw amino-acid sequence, 80 residues long: Putative ankyrin repeat protein RC0877 (80 aa).

The stretch at 6–46 (SGGIPLHAVAKNVRCTSKDIKDYEIYKLLVSYGADINARVE) is one ANK repeat.

This chain is Putative ankyrin repeat protein RC0877, found in Rickettsia conorii (strain ATCC VR-613 / Malish 7).